The primary structure comprises 717 residues: Polyribonucleotide nucleotidyltransferase (717 aa).

2 residues coordinate Mg(2+): Asp-496 and Asp-502. The 60-residue stretch at 563-622 (PRLLSFKIDPEMIGLVIGPGGKTIKGITEETGVKIDIDDDGTVTIAAADGEKAKQACNII) folds into the KH domain. The region spanning 632–700 (GDVYVGRVTR…SKGRVNLTRL (69 aa)) is the S1 motif domain.

The protein belongs to the polyribonucleotide nucleotidyltransferase family. Requires Mg(2+) as cofactor.

It localises to the cytoplasm. The catalysed reaction is RNA(n+1) + phosphate = RNA(n) + a ribonucleoside 5'-diphosphate. Its function is as follows. Involved in mRNA degradation. Catalyzes the phosphorolysis of single-stranded polyribonucleotides processively in the 3'- to 5'-direction. The sequence is that of Polyribonucleotide nucleotidyltransferase from Trichodesmium erythraeum (strain IMS101).